A 429-amino-acid polypeptide reads, in one-letter code: Glutamate-1-semialdehyde 2,1-aminomutase (429 aa).

The residue at position 268 (K268) is an N6-(pyridoxal phosphate)lysine.

Belongs to the class-III pyridoxal-phosphate-dependent aminotransferase family. HemL subfamily. As to quaternary structure, homodimer. It depends on pyridoxal 5'-phosphate as a cofactor.

Its subcellular location is the cytoplasm. The catalysed reaction is (S)-4-amino-5-oxopentanoate = 5-aminolevulinate. Its pathway is porphyrin-containing compound metabolism; protoporphyrin-IX biosynthesis; 5-aminolevulinate from L-glutamyl-tRNA(Glu): step 2/2. The chain is Glutamate-1-semialdehyde 2,1-aminomutase from Serratia proteamaculans (strain 568).